The sequence spans 352 residues: Nicotinate-nucleotide--dimethylbenzimidazole phosphoribosyltransferase (352 aa).

Glu-316 acts as the Proton acceptor in catalysis.

It belongs to the CobT family.

It catalyses the reaction 5,6-dimethylbenzimidazole + nicotinate beta-D-ribonucleotide = alpha-ribazole 5'-phosphate + nicotinate + H(+). It functions in the pathway nucleoside biosynthesis; alpha-ribazole biosynthesis; alpha-ribazole from 5,6-dimethylbenzimidazole: step 1/2. Catalyzes the synthesis of alpha-ribazole-5'-phosphate from nicotinate mononucleotide (NAMN) and 5,6-dimethylbenzimidazole (DMB). The chain is Nicotinate-nucleotide--dimethylbenzimidazole phosphoribosyltransferase from Ruminiclostridium cellulolyticum (strain ATCC 35319 / DSM 5812 / JCM 6584 / H10) (Clostridium cellulolyticum).